Here is a 124-residue protein sequence, read N- to C-terminus: Holo-[acyl-carrier-protein] synthase (124 aa).

Residues aspartate 8 and glutamate 57 each coordinate Mg(2+).

This sequence belongs to the P-Pant transferase superfamily. AcpS family. The cofactor is Mg(2+).

Its subcellular location is the cytoplasm. It carries out the reaction apo-[ACP] + CoA = holo-[ACP] + adenosine 3',5'-bisphosphate + H(+). In terms of biological role, transfers the 4'-phosphopantetheine moiety from coenzyme A to a Ser of acyl-carrier-protein. In Leptospira borgpetersenii serovar Hardjo-bovis (strain JB197), this protein is Holo-[acyl-carrier-protein] synthase.